The chain runs to 244 residues: Phosphoadenosine 5'-phosphosulfate reductase (244 aa).

The Nucleophile; cysteine thiosulfonate intermediate role is filled by C239.

It belongs to the PAPS reductase family. CysH subfamily.

The protein localises to the cytoplasm. It catalyses the reaction [thioredoxin]-disulfide + sulfite + adenosine 3',5'-bisphosphate + 2 H(+) = [thioredoxin]-dithiol + 3'-phosphoadenylyl sulfate. The protein operates within sulfur metabolism; hydrogen sulfide biosynthesis; sulfite from sulfate: step 3/3. Its function is as follows. Catalyzes the formation of sulfite from phosphoadenosine 5'-phosphosulfate (PAPS) using thioredoxin as an electron donor. The chain is Phosphoadenosine 5'-phosphosulfate reductase from Salmonella choleraesuis (strain SC-B67).